Reading from the N-terminus, the 139-residue chain is Small ribosomal subunit protein uS12 (139 aa).

D102 bears the 3-methylthioaspartic acid mark.

Belongs to the universal ribosomal protein uS12 family. Part of the 30S ribosomal subunit. Contacts proteins S8 and S17. May interact with IF1 in the 30S initiation complex.

In terms of biological role, with S4 and S5 plays an important role in translational accuracy. Functionally, interacts with and stabilizes bases of the 16S rRNA that are involved in tRNA selection in the A site and with the mRNA backbone. Located at the interface of the 30S and 50S subunits, it traverses the body of the 30S subunit contacting proteins on the other side and probably holding the rRNA structure together. The combined cluster of proteins S8, S12 and S17 appears to hold together the shoulder and platform of the 30S subunit. In Phytoplasma australiense, this protein is Small ribosomal subunit protein uS12.